Reading from the N-terminus, the 353-residue chain is Draxin-B (353 aa).

The N-terminal stretch at 1-21 is a signal peptide; that stretch reads MASSWCLPLALLVSNLAVSHS. 3 disordered regions span residues 23-183, 198-222, and 246-268; these read EPSS…KEGS, TVMSEHPPMLPPASTKPKKSGRGKV, and VDAWPSSRKKDKRRSKNLSSGNV. The segment covering 138–167 has biased composition (basic residues); sequence GPHKGKAQGHGHHFDHRRHGGRRDKGRHTK. The segment covering 252–261 has biased composition (basic residues); the sequence is SRKKDKRRSK. 2 N-linked (GlcNAc...) asparagine glycosylation sites follow: N262 and N267.

The protein belongs to the draxin family.

It localises to the secreted. Its function is as follows. Chemorepulsive axon guidance protein required for the development of spinal cord and forebrain commissures. Acts as a chemorepulsive guidance protein for commissural axons during development. Able to inhibit or repel neurite outgrowth from dorsal spinal cord. The sequence is that of Draxin-B (draxin-B) from Salmo salar (Atlantic salmon).